The chain runs to 249 residues: Acetylglutamate kinase (249 aa).

Substrate-binding positions include 36 to 37 (GG), Arg-58, and Asn-147.

This sequence belongs to the acetylglutamate kinase family. ArgB subfamily.

Its subcellular location is the cytoplasm. The enzyme catalyses N-acetyl-L-glutamate + ATP = N-acetyl-L-glutamyl 5-phosphate + ADP. It functions in the pathway amino-acid biosynthesis; L-arginine biosynthesis; N(2)-acetyl-L-ornithine from L-glutamate: step 2/4. Catalyzes the ATP-dependent phosphorylation of N-acetyl-L-glutamate. This Thermus thermophilus (strain ATCC 27634 / DSM 579 / HB8) protein is Acetylglutamate kinase.